We begin with the raw amino-acid sequence, 108 residues long: Tubulin-specific chaperone A (108 aa).

Residue A2 is modified to N-acetylalanine.

The protein belongs to the TBCA family. As to quaternary structure, supercomplex made of cofactors A to E. Cofactors A and D function by capturing and stabilizing tubulin in a quasi-native conformation. Cofactor E binds to the cofactor D-tubulin complex; interaction with cofactor C then causes the release of tubulin polypeptides that are committed to the native state. As to expression, widely expressed, but is most abundant in the testis.

The protein localises to the cytoplasm. It localises to the cytoskeleton. Its function is as follows. Tubulin-folding protein; involved in the early step of the tubulin folding pathway. The protein is Tubulin-specific chaperone A (Tbca) of Mus musculus (Mouse).